The sequence spans 833 residues: Neuronal tyrosine-phosphorylated phosphoinositide-3-kinase adapter 1 (833 aa).

Disordered regions lie at residues M1–R45, P64–L191, V219–P423, E645–I674, and H736–R765. The span at T8–S25 shows a compositional bias: basic and acidic residues. An involved in CYFIP1- and NCKAP1-binding region spans residues S76–P181. The segment covering P111–S120 has biased composition (basic residues). Over residues S162–F171 the composition is skewed to polar residues. The span at F220 to G239 shows a compositional bias: gly residues. A compositionally biased stretch (acidic residues) spans S248 to Y257. Positions G275–P285 are enriched in pro residues.

It belongs to the NYAP family. In terms of assembly, interacts with ACOT9, ARHGAP26 and PIK3R2. Interacts with components of the WAVE1 complex, CYFIP1 and NCKAP1; this interaction mediates PI3K-WAVE1 association and actin cytoskeleton remodeling. In terms of processing, phosphorylated on tyrosine residues by FYN upon stimulation with CNTN5. Phosphorylation begins at 14 dpc, reaches a peak during perinatal days in brain, then gradually decreases. Expressed predominantly in brain where it is present in the neurons, but not in astrocytes or oligodendrites.

In terms of biological role, activates PI3K and concomitantly recruits the WAVE1 complex to the close vicinity of PI3K and regulates neuronal morphogenesis. This chain is Neuronal tyrosine-phosphorylated phosphoinositide-3-kinase adapter 1 (Nyap1), found in Mus musculus (Mouse).